The primary structure comprises 410 residues: Lipid droplet-regulating VLDL assembly factor AUP1 (410 aa).

At Met-1 the chain carries N-acetylmethionine. The Cytoplasmic segment spans residues 1 to 20; the sequence is MEPPPAPGPERLFDSHRLPS. Residues 21–41 lie within the membrane without spanning it; the sequence is DGFLLLALLLYAPVGLCLLVL. The Cytoplasmic portion of the chain corresponds to 42 to 410; that stretch reads RLFLGLHVFL…FRERQAQEAE (369 aa). Positions 258-295 are disordered; the sequence is RLTPADKAEHMKRQRHPRLRPQSVQSSFPSPPSPSSDV. Position 292 is a phosphoserine (Ser-292). The CUE domain occupies 296-338; sequence QLTTLAHRVKEVLPHVPLNVIQRDLARTGCVDLTITNLLEGAV. The disordered stretch occupies residues 344–369; that stretch reads DVTEGSQSPPAPSAPKFPSSGLATPQ. Position 363 is a phosphoserine (Ser-363). Thr-367 bears the Phosphothreonine mark.

The protein belongs to the AUP1 family. As to quaternary structure, identified in a complex that contains SEL1L, OS9, FAF2/UBXD8, UBE2J1/UBC6E and AUP1. Interacts with the cytoplasmic tail of ITGA2B, ITGA1, ITGA2, ITGA5, ITGAV and ITGAM. Interacts (via C-terminus) with UBE2G2; the interaction recruits UBE2G2 to lipid droplets. Interacts with ubiquitin ligases AMFR/gp78 and RNF139/TRC8; this promotes interaction of UBE2G2 with AMFR and RNF139. Interacts with apolipoprotein APOB. Post-translationally, monoubiquitinated and diubiquitinated. In terms of tissue distribution, ubiquitous.

It localises to the endoplasmic reticulum membrane. The protein resides in the lipid droplet. Plays a role in the translocation of terminally misfolded proteins from the endoplasmic reticulum lumen to the cytoplasm and their degradation by the proteasome. Plays a role in lipid droplet formation. Induces lipid droplet clustering. Recruits ubiquitin-conjugating enzyme UBE2G2 to lipid droplets which facilitates its interaction with ubiquitin ligases AMFR/gp78 and RNF139/TRC8, leading to sterol-induced ubiquitination of HMGCR and its subsequent proteasomal degradation. Also required for the degradation of INSIG1, SREBF1 and SREBF2. Plays a role in regulating assembly and secretion of very low density lipoprotein particles and stability of apolipoprotein APOB. This is Lipid droplet-regulating VLDL assembly factor AUP1 from Mus musculus (Mouse).